Reading from the N-terminus, the 132-residue chain is UPF0719 inner membrane protein YjfL (132 aa).

The Periplasmic segment spans residues 1–6 (MHILDS). Residues 7-27 (LLAFSAYFFIGVAMVIIFLFI) form a helical membrane-spanning segment. Residues 28–46 (YSKITPHNEWQLIKNNNTA) are Cytoplasmic-facing. A helical membrane pass occupies residues 47 to 67 (ASLAFSGTLLGYVIPLSSAAI). Over 68–71 (NAVS) the chain is Periplasmic. A helical membrane pass occupies residues 72-92 (IPDYFAWGGIALVIQLLVFAG). Residues 93 to 109 (VRLYMPALSEKIINHNT) lie on the Cytoplasmic side of the membrane. A helical transmembrane segment spans residues 110-130 (AAGMFMGTAALAGGIFNAACM). The Periplasmic segment spans residues 131-132 (TW).

This sequence belongs to the UPF0719 family.

The protein resides in the cell inner membrane. This Escherichia coli O157:H7 protein is UPF0719 inner membrane protein YjfL (yjfL).